A 20-amino-acid chain; its full sequence is Cytosol aminopeptidase (20 aa).

Position 6 is a phosphoserine (S6).

It belongs to the peptidase M17 family. In terms of assembly, homohexamer. It depends on Zn(2+) as a cofactor. The cofactor is Mn(2+).

The protein localises to the cytoplasm. The enzyme catalyses Release of an N-terminal amino acid, Xaa-|-Yaa-, in which Xaa is preferably Leu, but may be other amino acids including Pro although not Arg or Lys, and Yaa may be Pro. Amino acid amides and methyl esters are also readily hydrolyzed, but rates on arylamides are exceedingly low.. The catalysed reaction is an S-substituted L-cysteinylglycine + H2O = an S-substituted L-cysteine + glycine. It catalyses the reaction L-cysteinylglycine + H2O = L-cysteine + glycine. It carries out the reaction S-benzyl-L-cysteinylglycine + H2O = S-benzyl-L-cysteine + glycine. The enzyme catalyses Release of N-terminal proline from a peptide.. In terms of biological role, cytosolic metallopeptidase that catalyzes the removal of unsubstituted N-terminal hydrophobic amino acids from various peptides. The presence of Zn(2+) ions is essential for the peptidase activity, and the association with other cofactors can modulate the substrate spectificity of the enzyme. For instance, in the presence of Mn(2+), it displays a specific Cys-Gly hydrolyzing activity of Cys-Gly-S-conjugates. Involved in the metabolism of glutathione and in the degradation of glutathione S-conjugates, which may play a role in the control of the cell redox status. In Mesocricetus auratus (Golden hamster), this protein is Cytosol aminopeptidase.